Consider the following 458-residue polypeptide: Argininosuccinate lyase (458 aa).

This sequence belongs to the lyase 1 family. Argininosuccinate lyase subfamily.

It is found in the cytoplasm. It carries out the reaction 2-(N(omega)-L-arginino)succinate = fumarate + L-arginine. The protein operates within amino-acid biosynthesis; L-arginine biosynthesis; L-arginine from L-ornithine and carbamoyl phosphate: step 3/3. The chain is Argininosuccinate lyase from Hydrogenobaculum sp. (strain Y04AAS1).